The primary structure comprises 560 residues: DNA ligase B (560 aa).

Lysine 124 acts as the N6-AMP-lysine intermediate in catalysis.

Belongs to the NAD-dependent DNA ligase family. LigB subfamily.

It carries out the reaction NAD(+) + (deoxyribonucleotide)n-3'-hydroxyl + 5'-phospho-(deoxyribonucleotide)m = (deoxyribonucleotide)n+m + AMP + beta-nicotinamide D-nucleotide.. Functionally, catalyzes the formation of phosphodiester linkages between 5'-phosphoryl and 3'-hydroxyl groups in double-stranded DNA using NAD as a coenzyme and as the energy source for the reaction. In Escherichia coli (strain ATCC 8739 / DSM 1576 / NBRC 3972 / NCIMB 8545 / WDCM 00012 / Crooks), this protein is DNA ligase B.